Here is a 155-residue protein sequence, read N- to C-terminus: Ribosomal RNA large subunit methyltransferase H (155 aa).

S-adenosyl-L-methionine contacts are provided by residues leucine 72, glycine 103, and 122 to 127 (LSDLTL).

The protein belongs to the RNA methyltransferase RlmH family. As to quaternary structure, homodimer.

Its subcellular location is the cytoplasm. It catalyses the reaction pseudouridine(1915) in 23S rRNA + S-adenosyl-L-methionine = N(3)-methylpseudouridine(1915) in 23S rRNA + S-adenosyl-L-homocysteine + H(+). Its function is as follows. Specifically methylates the pseudouridine at position 1915 (m3Psi1915) in 23S rRNA. This chain is Ribosomal RNA large subunit methyltransferase H, found in Delftia acidovorans (strain DSM 14801 / SPH-1).